A 174-amino-acid polypeptide reads, in one-letter code: MSIKSRIRTIPHYPHEGIMFRDITTLLKDPAGLRSTIDGIVQRYQTEKIDKVVGIESRGFIIAAPVAYALSAGFVPVRKQGKLPAETIGCDYQLEYGYDKVEIHVDAIDKGDRVLLIDDLIATGGTMEAAIKLVQEAGGEVIECCFVIDLPDIGGSRRLRQQGHRLFSLCSFED.

Belongs to the purine/pyrimidine phosphoribosyltransferase family. Homodimer.

The protein localises to the cytoplasm. It catalyses the reaction AMP + diphosphate = 5-phospho-alpha-D-ribose 1-diphosphate + adenine. It participates in purine metabolism; AMP biosynthesis via salvage pathway; AMP from adenine: step 1/1. Functionally, catalyzes a salvage reaction resulting in the formation of AMP, that is energically less costly than de novo synthesis. In Nitrosomonas europaea (strain ATCC 19718 / CIP 103999 / KCTC 2705 / NBRC 14298), this protein is Adenine phosphoribosyltransferase.